We begin with the raw amino-acid sequence, 178 residues long: Large ribosomal subunit protein uL6 (178 aa).

It belongs to the universal ribosomal protein uL6 family. In terms of assembly, part of the 50S ribosomal subunit.

This protein binds to the 23S rRNA, and is important in its secondary structure. It is located near the subunit interface in the base of the L7/L12 stalk, and near the tRNA binding site of the peptidyltransferase center. The polypeptide is Large ribosomal subunit protein uL6 (Limosilactobacillus fermentum (strain NBRC 3956 / LMG 18251) (Lactobacillus fermentum)).